We begin with the raw amino-acid sequence, 22 residues long: Mu-conotoxin GIIIC (22 aa).

3 disulfide bridges follow: Cys3–Cys15, Cys4–Cys20, and Cys10–Cys21. Pro6, Pro7, and Pro17 each carry 4-hydroxyproline. Ala22 is subject to Alanine amide.

This sequence belongs to the conotoxin M superfamily. Expressed by the venom duct.

Its subcellular location is the secreted. Its function is as follows. Mu-conotoxins block voltage-gated sodium channels (Nav). This toxin shows potent activity on Nav1.4/SCN4A (IC(50)=286 nM), and weak activity on mNav1.6/SCN8A. This chain is Mu-conotoxin GIIIC, found in Conus geographus (Geography cone).